We begin with the raw amino-acid sequence, 153 residues long: Putative pre-16S rRNA nuclease (153 aa).

This sequence belongs to the YqgF nuclease family.

Its subcellular location is the cytoplasm. Could be a nuclease involved in processing of the 5'-end of pre-16S rRNA. The protein is Putative pre-16S rRNA nuclease of Koribacter versatilis (strain Ellin345).